Reading from the N-terminus, the 487-residue chain is MGDTGLRKRREDEKSIQSQEPKTTSLQKELGLISGISIIVGTIIGSGIFVSPKSVLSNTEAVGPCLIIWAACGVLATLGALCFAELGTMITKSGGEYPYLMEAYGPIPAYLFSWASLIVIKPTSFAIICLSFSEYVCAPFYVGCKPPQIVVKCLAAAAILFISTVNSLSVRLGSYVQNIFTAAKLVIVAIIIISGLVLLAQGNTKNFDNSFEGAQLSVGAISLAFYNGLWAYDGWNQLNYITEELRNPYRNLPLAIIIGIPLVTACYILMNVSYFTVMTATELLQSQAVAVTFGDRVLYPASWIVPLFVAFSTIGAANGTCFTAGRLIYVAGREGHMLKVLSYISVRRLTPAPAIIFYGIIATIYIIPGDINSLVNYFSFAAWLFYGLTILGLIVMRFTRKELERPIKVPVVIPVLMTLISVFLVLAPIISKPTWEYLYCVLFILSGLLFYFLFVHYKFGWAQKISKPITMHLQMLMEVVPPEEDPE.

The span at 1–15 (MGDTGLRKRREDEKS) shows a compositional bias: basic and acidic residues. The tract at residues 1-22 (MGDTGLRKRREDEKSIQSQEPK) is disordered. Over 1-31 (MGDTGLRKRREDEKSIQSQEPKTTSLQKELG) the chain is Cytoplasmic. Ser-18 bears the Phosphoserine mark. Residues 32–55 (LISGISIIVGTIIGSGIFVSPKSV) traverse the membrane as a helical segment. 43 to 47 (IIGSG) contributes to the L-arginine binding site. Topologically, residues 56–62 (LSNTEAV) are extracellular. A helical membrane pass occupies residues 63–84 (GPCLIIWAACGVLATLGALCFA). At 85 to 110 (ELGTMITKSGGEYPYLMEAYGPIPAY) the chain is on the cytoplasmic side. The helical transmembrane segment at 111-137 (LFSWASLIVIKPTSFAIICLSFSEYVC) threads the bilayer. The Extracellular segment spans residues 138-147 (APFYVGCKPP). Transmembrane regions (helical) follow at residues 148 to 169 (QIVV…NSLS) and 170 to 193 (VRLG…IIII). Over 194-217 (SGLVLLAQGNTKNFDNSFEGAQLS) the chain is Extracellular. Residues 218 to 238 (VGAISLAFYNGLWAYDGWNQL) traverse the membrane as a helical segment. L-arginine is bound at residue Asp-233. Over 239–251 (NYITEELRNPYRN) the chain is Cytoplasmic. A helical membrane pass occupies residues 252–274 (LPLAIIIGIPLVTACYILMNVSY). Residues 275–302 (FTVMTATELLQSQAVAVTFGDRVLYPAS) are Extracellular-facing. The chain crosses the membrane as a helical span at residues 303 to 325 (WIVPLFVAFSTIGAANGTCFTAG). The Cytoplasmic segment spans residues 326 to 351 (RLIYVAGREGHMLKVLSYISVRRLTP). 2 consecutive transmembrane segments (helical) span residues 352-370 (APAI…IPGD) and 371-391 (INSL…LTIL). Residues 392 to 410 (GLIVMRFTRKELERPIKVP) are Cytoplasmic-facing. A helical transmembrane segment spans residues 411 to 431 (VVIPVLMTLISVFLVLAPIIS). At 432–434 (KPT) the chain is on the extracellular side. Residues 435 to 450 (WEYLYCVLFILSGLLF) form a helical membrane-spanning segment. At 451–487 (YFLFVHYKFGWAQKISKPITMHLQMLMEVVPPEEDPE) the chain is on the cytoplasmic side.

Belongs to the amino acid-polyamine-organocation (APC) superfamily. As to quaternary structure, disulfide-linked heterodimer composed of the catalytic light chain subunit SLC7A9 and the heavy chain subunit SLC3A1. The heterodimer is the minimal functional unit. Assembles in heterotetramers (dimers of heterodimers) and higher order oligomers; the oligomerization is mediated by SLC3A1 likely to prevent degradation and facilitate heteromer trafficking to the plasma membrane. Interacts with CAV1. As to expression, expressed in the brush border membrane in the kidney (at protein level). Kidney, small intestine, liver and placenta.

The protein localises to the apical cell membrane. Its subcellular location is the cell membrane. The enzyme catalyses L-leucine(out) + L-arginine(in) = L-leucine(in) + L-arginine(out). It carries out the reaction L-histidine(out) + L-arginine(in) = L-histidine(in) + L-arginine(out). It catalyses the reaction L-arginine(in) + L-phenylalanine(out) = L-arginine(out) + L-phenylalanine(in). The catalysed reaction is L-cysteine(out) + L-arginine(in) = L-cysteine(in) + L-arginine(out). The enzyme catalyses L-cystine(out) + L-arginine(in) = L-cystine(in) + L-arginine(out). It carries out the reaction L-lysine(out) + L-arginine(in) = L-lysine(in) + L-arginine(out). Its function is as follows. Associates with SLC3A1 to form a functional transporter complex that mediates the electrogenic exchange between cationic amino acids and neutral amino acids, with a stoichiometry of 1:1. Has system b(0,+)-like activity with high affinity for extracellular cationic amino acids and L-cystine and lower affinity for intracellular neutral amino acids. Substrate exchange is driven by high concentration of intracellular neutral amino acids and the intracellular reduction of L-cystine to L-cysteine. Required for reabsorption of L-cystine and dibasic amino acids across the brush border membrane in renal proximal tubules. The chain is b(0,+)-type amino acid transporter 1 from Homo sapiens (Human).